A 172-amino-acid chain; its full sequence is RNA pyrophosphohydrolase (172 aa).

The 144-residue stretch at 6–149 (GYRLNVGIVI…KRDVYRRAMK (144 aa)) folds into the Nudix hydrolase domain. The short motif at 38 to 59 (GGIDEGETPEQAMYRELYEEVG) is the Nudix box element.

Belongs to the Nudix hydrolase family. RppH subfamily. The cofactor is a divalent metal cation.

Accelerates the degradation of transcripts by removing pyrophosphate from the 5'-end of triphosphorylated RNA, leading to a more labile monophosphorylated state that can stimulate subsequent ribonuclease cleavage. The protein is RNA pyrophosphohydrolase of Vibrio atlanticus (strain LGP32) (Vibrio splendidus (strain Mel32)).